The sequence spans 89 residues: UPF0297 protein SUB1776 (89 aa).

The protein belongs to the UPF0297 family.

The chain is UPF0297 protein SUB1776 from Streptococcus uberis (strain ATCC BAA-854 / 0140J).